The chain runs to 217 residues: Ras-related protein RABA1g (217 aa).

GTP is bound at residue 20–27 (GDSGVGKS). An Effector region motif is present at residues 42–50 (SKSTIGVEF). GTP contacts are provided by residues 68 to 72 (DTAGQ), 126 to 129 (NKAD), and 156 to 157 (SA). S-geranylgeranyl cysteine attachment occurs at residues cysteine 214 and cysteine 215.

This sequence belongs to the small GTPase superfamily. Rab family.

It is found in the cell membrane. Intracellular vesicle trafficking and protein transport. The sequence is that of Ras-related protein RABA1g (RABA1G) from Arabidopsis thaliana (Mouse-ear cress).